The chain runs to 98 residues: Keratin-associated protein 3-3 (98 aa).

Alanine 2 is subject to N-acetylalanine. Repeat copies occupy residues 3 to 7, 8 to 12, and 47 to 51. Residues 3–59 form a 3 X 5 AA repeats of C-C-X(3) region; sequence CCAPLCCSARTSPATTICSSDKFCRCGVCLPSTCPHTVWLLEPTCCDNCPPPCHIPQ.

The protein belongs to the KRTAP type 3 family. As to quaternary structure, interacts with hair keratins.

Functionally, in the hair cortex, hair keratin intermediate filaments are embedded in an interfilamentous matrix, consisting of hair keratin-associated proteins (KRTAP), which are essential for the formation of a rigid and resistant hair shaft through their extensive disulfide bond cross-linking with abundant cysteine residues of hair keratins. The matrix proteins include the high-sulfur and high-glycine-tyrosine keratins. This Bos taurus (Bovine) protein is Keratin-associated protein 3-3.